A 443-amino-acid polypeptide reads, in one-letter code: SURP and G-patch domain-containing protein 1-like protein (443 aa).

Disordered regions lie at residues 45–71 (IISN…KGGK) and 83–141 (LAPP…TVKK). The SURP motif repeat unit spans residues 142–185 (VADKLASFVAKHGRPFEHITRQKNPGDTPFKFLFDENCADYKYY). Disordered stretches follow at residues 198 to 221 (QTKD…AIPL), 241 to 272 (TPVE…RGAD), and 285 to 325 (AQEE…HHMG). Over residues 248-265 (SSRSAQASITRPSDSDSF) the composition is skewed to polar residues. A compositionally biased stretch (basic and acidic residues) spans 285 to 300 (AQEEKMRRPRQSKDEM). Over residues 307-316 (QGPSETSSTD) the composition is skewed to polar residues. Residues 360 to 407 (ADNVGHKLLSKMGWKEGEGIGSSRKGMADPIMAGDVKTNNLGVGASAP) form the G-patch domain.

It is found in the nucleus. The sequence is that of SURP and G-patch domain-containing protein 1-like protein from Arabidopsis thaliana (Mouse-ear cress).